We begin with the raw amino-acid sequence, 996 residues long: Oxysterol-binding protein homolog 3 (996 aa).

The interval 1-183 (METIDIQNRS…KKKILFNASV (183 aa)) is GOLD domain. A disordered region spans residues 75 to 114 (GSSSNIEEHHRRSSQHSHSSSNGSDNKRKERSYSSLSISG). Ser-190 and Ser-193 each carry phosphoserine. Phosphothreonine is present on Thr-210. One can recognise a PH domain in the interval 221-315 (GRYLQGYLLK…WVDALQTCFD (95 aa)). Residue Thr-323 is modified to Phosphothreonine. Ser-324 is modified (phosphoserine). Phosphothreonine occurs at positions 325 and 352. Residues 338–372 (EVINKSSPQDHDHLTPTATTKSALSHRQHTQKDMD) form a disordered region. The FFAT signature appears at 514–520 (EFFDAEE). The disordered stretch occupies residues 556–611 (KEVQLSGSEQIASSSVESYTTNDENHSRKHLKNRHKNRRRGHPHHQKTKSAQSSTE). Residues 558–577 (VQLSGSEQIASSSVESYTTN) are compositionally biased toward polar residues. Residues 582 to 603 (SRKHLKNRHKNRRRGHPHHQKT) are compositionally biased toward basic residues. A Phosphoserine modification is found at Ser-605. The segment at 642-982 (SLLSFLRKNV…YITGPKSYWE (341 aa)) is OSBP-related domain (ORD). A 1,2-diacyl-sn-glycero-3-phospho-(1D-myo-inositol 4-phosphate)-binding positions include 657–660 (SIAM), Lys-717, 745–746 (HR), and 945–949 (EQLQR).

The protein belongs to the OSBP family. Interacts with SCS2.

Its subcellular location is the cytoplasm. The protein resides in the endoplasmic reticulum membrane. Lipid transport protein (LTP) involved in non-vesicular transfer of lipids between membranes. Functions in phosphoinositide-coupled directional transport of various lipids by carrying the lipid molecule in a hydrophobic pocket and transferring it between membranes through the cytosol. Involved in maintenance of intracellular sterol distribution and homeostasis. May serve as a sensor of PI4P levels at PM-ER membrane contact site, regulating PI4P phosphatase SAC1 activity. May be involved in ergosterol transport from the plasma membrane (PM) to the ER, however it does not bind sterols directly. Plays a role in the positive regulation of vesicular transport of ceramide from the ER to the Golgi, negatively regulating COPII-mediated ER export of cargos. In Saccharomyces cerevisiae (strain ATCC 204508 / S288c) (Baker's yeast), this protein is Oxysterol-binding protein homolog 3.